The following is a 391-amino-acid chain: Transaldolase (391 aa).

The Schiff-base intermediate with substrate role is filled by Lys134. 2 consecutive EF-hand domains span residues Thr329–Leu364 and Asp365–Leu387. Ca(2+) is bound by residues Asp342, Asp344, Asp346, Glu353, Asp365, Asn367, Asp369, Lys371, and Asp376.

The protein belongs to the transaldolase family. Type 1 subfamily.

The protein localises to the cytoplasm. It catalyses the reaction D-sedoheptulose 7-phosphate + D-glyceraldehyde 3-phosphate = D-erythrose 4-phosphate + beta-D-fructose 6-phosphate. The protein operates within carbohydrate degradation; pentose phosphate pathway; D-glyceraldehyde 3-phosphate and beta-D-fructose 6-phosphate from D-ribose 5-phosphate and D-xylulose 5-phosphate (non-oxidative stage): step 2/3. In terms of biological role, transaldolase is important for the balance of metabolites in the pentose-phosphate pathway. In Thermosynechococcus vestitus (strain NIES-2133 / IAM M-273 / BP-1), this protein is Transaldolase.